The sequence spans 950 residues: Protocadherin alpha-13 (950 aa).

The first 29 residues, 1–29 (MLSSWQGGPRPRQLLLWLLILAAWETGSG), serve as a signal peptide directing secretion. Over 30–697 (QLHYSVPEEA…GPEAALVDVN (668 aa)) the chain is Extracellular. Cadherin domains are found at residues 34-133 (SVPE…PPIF), 134-242 (PESK…APEF), 243-350 (YQSV…APEV), 351-455 (TITS…APAF), 456-565 (AQPE…APAL), and 581-678 (MPRS…APQA). 2 N-linked (GlcNAc...) asparagine glycosylation sites follow: Asn257 and Asn265. N-linked (GlcNAc...) asparagine glycosylation occurs at Asn548. A helical transmembrane segment spans residues 698–718 (VYLIIAICAVSSLLVLTLLLY). The Cytoplasmic portion of the chain corresponds to 719 to 950 (TALRCSAPPT…GNSTTDNSDQ (232 aa)). 6 PXXP repeats span residues 734–737 (PGKP), 774–777 (PSLP), 799–802 (PRQP), 832–835 (PGGP), 873–876 (PGNP), and 891–894 (PGSP). The segment at 734–894 (PGKPTLVCSS…PDKFIIPGSP (161 aa)) is 6 X 4 AA repeats of P-X-X-P. Disordered regions lie at residues 774–808 (PSLP…DWRY) and 827–950 (ILRA…NSDQ). Basic and acidic residues predominate over residues 787–800 (GQREEDSEGLKEPR). Over residues 909 to 923 (DKSDFITFGKKEETK) the composition is skewed to basic and acidic residues.

It localises to the cell membrane. Its function is as follows. Potential calcium-dependent cell-adhesion protein. May be involved in the establishment and maintenance of specific neuronal connections in the brain. The chain is Protocadherin alpha-13 (PCDHA13) from Pan troglodytes (Chimpanzee).